A 346-amino-acid chain; its full sequence is NADH-ubiquinone oxidoreductase chain 2 (346 aa).

9 consecutive transmembrane segments (helical) span residues A7 to I27, Y59 to W79, I93 to F115, T151 to N171, I178 to P198, I200 to N220, T242 to P262, L275 to L294, and L325 to I345.

Belongs to the complex I subunit 2 family.

The protein resides in the mitochondrion inner membrane. It carries out the reaction a ubiquinone + NADH + 5 H(+)(in) = a ubiquinol + NAD(+) + 4 H(+)(out). In terms of biological role, core subunit of the mitochondrial membrane respiratory chain NADH dehydrogenase (Complex I) that is believed to belong to the minimal assembly required for catalysis. Complex I functions in the transfer of electrons from NADH to the respiratory chain. The immediate electron acceptor for the enzyme is believed to be ubiquinone. In Pelomedusa subrufa (African side-necked turtle), this protein is NADH-ubiquinone oxidoreductase chain 2 (MT-ND2).